The primary structure comprises 40 residues: Photosystem II reaction center protein J (40 aa).

Residues 8 to 28 traverse the membrane as a helical segment; sequence IPLWLIGTVAGIAVIGLVGVF.

Belongs to the PsbJ family. As to quaternary structure, PSII is composed of 1 copy each of membrane proteins PsbA, PsbB, PsbC, PsbD, PsbE, PsbF, PsbH, PsbI, PsbJ, PsbK, PsbL, PsbM, PsbT, PsbX, PsbY, PsbZ, Psb30/Ycf12, at least 3 peripheral proteins of the oxygen-evolving complex and a large number of cofactors. It forms dimeric complexes.

Its subcellular location is the plastid. The protein resides in the chloroplast thylakoid membrane. Its function is as follows. One of the components of the core complex of photosystem II (PSII). PSII is a light-driven water:plastoquinone oxidoreductase that uses light energy to abstract electrons from H(2)O, generating O(2) and a proton gradient subsequently used for ATP formation. It consists of a core antenna complex that captures photons, and an electron transfer chain that converts photonic excitation into a charge separation. This Secale cereale (Rye) protein is Photosystem II reaction center protein J.